The primary structure comprises 107 residues: Phosphoribosyl-ATP pyrophosphatase (107 aa).

The protein belongs to the PRA-PH family.

It localises to the cytoplasm. The enzyme catalyses 1-(5-phospho-beta-D-ribosyl)-ATP + H2O = 1-(5-phospho-beta-D-ribosyl)-5'-AMP + diphosphate + H(+). It functions in the pathway amino-acid biosynthesis; L-histidine biosynthesis; L-histidine from 5-phospho-alpha-D-ribose 1-diphosphate: step 2/9. In Sinorhizobium medicae (strain WSM419) (Ensifer medicae), this protein is Phosphoribosyl-ATP pyrophosphatase.